Reading from the N-terminus, the 347-residue chain is Nuclear distribution protein nudE-like 1 (347 aa).

Residues 28-190 (QSFQEARDEL…LAVRERQQEV (163 aa)) adopt a coiled-coil conformation. Positions 56–166 (VQAEQRNRDL…LDEKESLLVS (111 aa)) are self-association. An interaction with KATNB1 region spans residues 64–189 (DLQADNQRLK…ELAVRERQQE (126 aa)). The segment at 114-133 (YVRELEQANDDLERAKRATI) is required for interaction with PAFAH1B1. The interaction with CENPF stretch occupies residues 175–347 (RDLRQELAVR…SAPGMLPLSV (173 aa)). Positions 189–256 (EVTRKSAPSS…SARISALNIV (68 aa)) are interaction with YWHAE. The interaction with NEFL stretch occupies residues 191-347 (TRKSAPSSPT…SAPGMLPLSV (157 aa)). The segment at 195–256 (APSSPTLDCE…SARISALNIV (62 aa)) is interaction with KATNA1. Ser215 carries the post-translational modification Phosphoserine. Position 219 is a phosphothreonine; by CDK1 and MAPK1 (Thr219). At Ser231 the chain carries Phosphoserine. An interaction with DISC1 region spans residues 241 to 280 (TSPLTPSARISALNIVGDLLRKVGALESKLAACRNFAKDQ). Ser242 bears the Phosphoserine; by CDK1 mark. A Phosphothreonine; by CDK1 and MAPK1 modification is found at Thr245. Residues 256-291 (VGDLLRKVGALESKLAACRNFAKDQASRKSYISGNV) are required for localization to the centrosome and interaction with dynein, dynactin, tubulin gamma, PCM1 and PCNT. Residue Cys273 is the site of S-palmitoyl cysteine; by ZDHHC2, ZDHHC3 and ZDHHC7 attachment. The segment at 314–347 (KGAVNGFDPAPPPPDPGLGSSRPSSAPGMLPLSV) is disordered. Ser346 bears the Phosphoserine mark.

The protein belongs to the nudE family. As to quaternary structure, self-associates. Interacts with DISC1, dynein, dynactin, tubulin gamma, KATNA1, KATNB1, microtubules, PAFAH1B1, PCM1, PCNT, and YWHAE. Interacts directly with NEFL and indirectly with NEFH. Interacts (via C-terminus) with CENPF. Interacts with ZNF365. Interacts with PLEKHM1 (via N- and C-terminus). Interacts with GTP-bound RAB9A; the interaction may lead to RAB9A-dynein motor tethering. Phosphorylated in mitosis. Can be phosphorylated by CDK1, CDK5 and MAPK1. Phosphorylation by CDK5 promotes interaction with KATNA1 and YWHAE. Post-translationally, palmitoylation at Cys-273 reduces affinity for dynein.

The protein resides in the cytoplasm. It is found in the cytoskeleton. Its subcellular location is the microtubule organizing center. The protein localises to the centrosome. It localises to the chromosome. The protein resides in the centromere. It is found in the kinetochore. Its subcellular location is the spindle. Its function is as follows. Required for organization of the cellular microtubule array and microtubule anchoring at the centrosome. May regulate microtubule organization at least in part by targeting the microtubule severing protein KATNA1 to the centrosome. Also positively regulates the activity of the minus-end directed microtubule motor protein dynein. May enhance dynein-mediated microtubule sliding by targeting dynein to the microtubule plus ends. Required for several dynein- and microtubule-dependent processes such as the maintenance of Golgi integrity, the centripetal motion of secretory vesicles and the coupling of the nucleus and centrosome. Also required during brain development for the migration of newly formed neurons from the ventricular/subventricular zone toward the cortical plate. Required for mitosis in some cell types but appears to be dispensible for mitosis in cortical neuronal progenitors, which instead requires NDE1. Facilitates the polymerization of neurofilaments from the individual subunits NEFH and NEFL. Positively regulates lysosome peripheral distribution and ruffled border formation in osteoclasts. Plays a role, together with DISC1, in the regulation of neurite outgrowth. May act as a RAB9A/B effector that tethers RAB9-associated late endosomes to the dynein motor for their retrograde transport to the trans-Golgi network. The sequence is that of Nuclear distribution protein nudE-like 1 (NDEL1) from Macaca fascicularis (Crab-eating macaque).